A 642-amino-acid polypeptide reads, in one-letter code: Threonine--tRNA ligase (642 aa).

Positions 1–61 (MIKVTFPDGN…EHDGKLQLLT (61 aa)) constitute a TGS domain. The segment at 240–539 (DHRKIGKDLD…LIEEYKGSFP (300 aa)) is catalytic. Residues cysteine 334, histidine 385, and histidine 516 each contribute to the Zn(2+) site.

The protein belongs to the class-II aminoacyl-tRNA synthetase family. As to quaternary structure, homodimer. Requires Zn(2+) as cofactor.

The protein resides in the cytoplasm. It catalyses the reaction tRNA(Thr) + L-threonine + ATP = L-threonyl-tRNA(Thr) + AMP + diphosphate + H(+). Functionally, catalyzes the attachment of threonine to tRNA(Thr) in a two-step reaction: L-threonine is first activated by ATP to form Thr-AMP and then transferred to the acceptor end of tRNA(Thr). Also edits incorrectly charged L-seryl-tRNA(Thr). This is Threonine--tRNA ligase from Acholeplasma laidlawii (strain PG-8A).